Consider the following 610-residue polypeptide: Probable pleckstrin homology domain-containing family N member 1 (610 aa).

Residues 1-30 (MGNSHCVPQAPRRLRASFSRKPSLKGNRED) form a disordered region. Residue Gly-2 is the site of N-myristoyl glycine attachment. An interaction with C1QBP region spans residues 61–100 (TDIPGPEHHPENLEQPFLSVFKKGWRRTPVRNLGKVVHYS). PH domains follow at residues 96-192 (VVHY…MALL) and 227-324 (AICA…SRRD). Tyr-307 bears the Phosphotyrosine mark. 4 disordered regions span residues 327 to 357 (HLPP…SNGR), 371 to 431 (QSLP…PLPL), 443 to 473 (LDSG…ATSR), and 493 to 610 (PGPD…IQWI). Polar residues-rich tracts occupy residues 371–380 (QSLPESSVPT) and 391–402 (NQTDSNCVSTGQ). Phosphotyrosine is present on Tyr-462. The span at 504 to 526 (VSVSVPVSESSSGISSSPGPLGS) shows a compositional bias: low complexity.

Found in a complex with cytochrome c mRNA and various ribosomal proteins. Interacts with C1QBP, ELAVL1 and BID. In terms of processing, phosphorylation is essential for its mitochondrial localization and regulates its interaction with C1QBP. In terms of tissue distribution, testis and adipose tissue (at protein level). Ubiquitous.

The protein localises to the cell membrane. Its subcellular location is the mitochondrion membrane. It localises to the mitochondrion. In terms of biological role, controls the stability of the leptin mRNA harboring an AU-rich element (ARE) in its 3' UTR, in cooperation with the RNA stabilizer ELAVL1. Decreases the stability of the leptin mRNA by antagonizing the function of ELAVL1 by inducing its atypical recruitment from the nucleus to the cytosol. Binds to cardiolipin (CL), phosphatidic acid (PA), phosphatidylinositol 4-phosphate (PtdIns(4)P) and phosphatidylserine (PS). In Mus musculus (Mouse), this protein is Probable pleckstrin homology domain-containing family N member 1 (Plekhn1).